The sequence spans 290 residues: 4-hydroxy-3-methylbut-2-enyl diphosphate reductase (290 aa).

Residue Cys12 coordinates [4Fe-4S] cluster. Positions 50 and 83 each coordinate (2E)-4-hydroxy-3-methylbut-2-enyl diphosphate. His50 and His83 together coordinate dimethylallyl diphosphate. Positions 50 and 83 each coordinate isopentenyl diphosphate. [4Fe-4S] cluster is bound at residue Cys105. His133 lines the (2E)-4-hydroxy-3-methylbut-2-enyl diphosphate pocket. His133 lines the dimethylallyl diphosphate pocket. His133 is a binding site for isopentenyl diphosphate. The active-site Proton donor is the Glu135. (2E)-4-hydroxy-3-methylbut-2-enyl diphosphate is bound at residue Thr173. Cys202 serves as a coordination point for [4Fe-4S] cluster. The (2E)-4-hydroxy-3-methylbut-2-enyl diphosphate site is built by Ser230, Asn232, and Ser274. Ser230, Asn232, and Ser274 together coordinate dimethylallyl diphosphate. Isopentenyl diphosphate contacts are provided by Ser230, Asn232, and Ser274.

Belongs to the IspH family. The cofactor is [4Fe-4S] cluster.

The catalysed reaction is isopentenyl diphosphate + 2 oxidized [2Fe-2S]-[ferredoxin] + H2O = (2E)-4-hydroxy-3-methylbut-2-enyl diphosphate + 2 reduced [2Fe-2S]-[ferredoxin] + 2 H(+). It catalyses the reaction dimethylallyl diphosphate + 2 oxidized [2Fe-2S]-[ferredoxin] + H2O = (2E)-4-hydroxy-3-methylbut-2-enyl diphosphate + 2 reduced [2Fe-2S]-[ferredoxin] + 2 H(+). The protein operates within isoprenoid biosynthesis; dimethylallyl diphosphate biosynthesis; dimethylallyl diphosphate from (2E)-4-hydroxy-3-methylbutenyl diphosphate: step 1/1. It participates in isoprenoid biosynthesis; isopentenyl diphosphate biosynthesis via DXP pathway; isopentenyl diphosphate from 1-deoxy-D-xylulose 5-phosphate: step 6/6. Catalyzes the conversion of 1-hydroxy-2-methyl-2-(E)-butenyl 4-diphosphate (HMBPP) into a mixture of isopentenyl diphosphate (IPP) and dimethylallyl diphosphate (DMAPP). Acts in the terminal step of the DOXP/MEP pathway for isoprenoid precursor biosynthesis. This chain is 4-hydroxy-3-methylbut-2-enyl diphosphate reductase, found in Nitratidesulfovibrio vulgaris (strain ATCC 29579 / DSM 644 / CCUG 34227 / NCIMB 8303 / VKM B-1760 / Hildenborough) (Desulfovibrio vulgaris).